A 424-amino-acid polypeptide reads, in one-letter code: Hemagglutinin-esterase (424 aa).

Positions 1–16 (MFLLPRFCLVCSIIGT) are cleaved as a signal peptide. An esterase domain 1 region spans residues 7–127 (FCLVCSIIGT…NNDIWMQNKG (121 aa)). Residues 17 to 392 (FGFENPPTNV…PICVYDPLPI (376 aa)) are Virion surface-facing. The active-site Nucleophile is serine 40. A disulfide bridge links cysteine 44 with cysteine 65. 5 N-linked (GlcNAc...) asparagine; by host glycosylation sites follow: asparagine 54, asparagine 89, asparagine 153, asparagine 236, and asparagine 301. 3 disulfide bridges follow: cysteine 113–cysteine 162, cysteine 197–cysteine 276, and cysteine 205–cysteine 249. Residues 128–266 (LFYTQVYKKM…GNYLAISNEL (139 aa)) are receptor binding. The segment at 267–379 (LLTVPTKAIC…NCPTAASIIS (113 aa)) is esterase domain 2. A disulfide bond links cysteine 307 and cysteine 312. Asparagine 316 carries N-linked (GlcNAc...) asparagine; by host glycosylation. Catalysis depends on charge relay system residues aspartate 326 and histidine 329. A disulfide bridge connects residues cysteine 347 and cysteine 371. The N-linked (GlcNAc...) asparagine; by host glycan is linked to asparagine 358. Residues 393 to 413 (ILLGILLGVAVIVIVVLLLYF) traverse the membrane as a helical segment. Residues 414–424 (MVDNGIRQHYA) lie on the Intravirion side of the membrane.

The protein belongs to the influenza type C/coronaviruses hemagglutinin-esterase family. As to quaternary structure, homodimer; disulfide-linked. Forms a complex with the M protein in the pre-Golgi. Associates then with S-M complex to form a ternary complex S-M-HE. N-glycosylated in the host RER.

It is found in the virion membrane. Its subcellular location is the host cell membrane. It carries out the reaction N-acetyl-9-O-acetylneuraminate + H2O = N-acetylneuraminate + acetate + H(+). It catalyses the reaction N-acetyl-4-O-acetylneuraminate + H2O = N-acetylneuraminate + acetate + H(+). Functionally, structural protein that makes short spikes at the surface of the virus. Contains receptor binding and receptor-destroying activities. Mediates de-O-acetylation of N-acetyl-4-O-acetylneuraminic acid, which is probably the receptor determinant recognized by the virus on the surface of erythrocytes and susceptible cells. This receptor-destroying activity is important for virus release as it probably helps preventing self-aggregation and ensures the efficient spread of the progeny virus from cell to cell. May serve as a secondary viral attachment protein for initiating infection, the spike protein being the major one. May become a target for both the humoral and the cellular branches of the immune system. In Sus scrofa (Pig), this protein is Hemagglutinin-esterase.